A 1093-amino-acid polypeptide reads, in one-letter code: Atos homolog protein A (1093 aa).

Residues Ala29–Thr37 form a transactivation domain 1 (TAD1) region. 3 disordered regions span residues Ala396–Leu479, Ser558–Lys579, and His746–Arg788. Residues His746 to Asp763 are compositionally biased toward basic and acidic residues. Positions Leu895–Tyr952 are required for macropage invasion. The interval Phe979–Lys987 is transactivation domain 2 (TAD2).

This sequence belongs to the ATOS family.

The protein localises to the nucleus. In terms of biological role, transcription regulator that syncronizes transcriptional and translational programs to promote macrophage invasion of tissues. In Gallus gallus (Chicken), this protein is Atos homolog protein A (ATOSA).